Here is a 251-residue protein sequence, read N- to C-terminus: Small ribosomal subunit protein uS4c (251 aa).

2 S4 RNA-binding domains span residues 110–170 (MRLD…KLVN) and 189–251 (RTLA…QFSE).

It belongs to the universal ribosomal protein uS4 family. As to quaternary structure, part of the 30S ribosomal subunit. Contacts protein S5. The interaction surface between S4 and S5 is involved in control of translational fidelity.

The protein localises to the plastid. Its subcellular location is the chloroplast. In terms of biological role, one of the primary rRNA binding proteins, it binds directly to 16S rRNA where it nucleates assembly of the body of the 30S subunit. With S5 and S12 plays an important role in translational accuracy. This is Small ribosomal subunit protein uS4c (rps4) from Tetradesmus obliquus (Green alga).